The sequence spans 78 residues: Exodeoxyribonuclease 7 small subunit (78 aa).

This sequence belongs to the XseB family. As to quaternary structure, heterooligomer composed of large and small subunits.

The protein localises to the cytoplasm. It catalyses the reaction Exonucleolytic cleavage in either 5'- to 3'- or 3'- to 5'-direction to yield nucleoside 5'-phosphates.. Bidirectionally degrades single-stranded DNA into large acid-insoluble oligonucleotides, which are then degraded further into small acid-soluble oligonucleotides. In Synechococcus sp. (strain JA-3-3Ab) (Cyanobacteria bacterium Yellowstone A-Prime), this protein is Exodeoxyribonuclease 7 small subunit.